The chain runs to 141 residues: Cholinesterase (141 aa).

Asn39 is a glycosylation site (N-linked (GlcNAc...) asparagine). 49–50 (GG) is a binding site for substrate. The Acyl-ester intermediate role is filled by Ser131. The residue at position 131 (Ser131) is a Phosphoserine.

Belongs to the type-B carboxylesterase/lipase family. As to quaternary structure, homotetramer; disulfide-linked. Dimer of dimers. In terms of tissue distribution, present in most cells except erythrocytes.

The protein localises to the secreted. The enzyme catalyses an acylcholine + H2O = a carboxylate + choline + H(+). Esterase with broad substrate specificity. Contributes to the inactivation of the neurotransmitter acetylcholine. Can degrade neurotoxic organophosphate esters. In Sus scrofa (Pig), this protein is Cholinesterase (BCHE).